Consider the following 126-residue polypeptide: Cysteine-rich tail protein 1 (126 aa).

Positions Met-1–Pro-89 are disordered.

Belongs to the CYSRT1 family. In terms of assembly, interacts with components of the late cornfied envelope (LCE).

Its subcellular location is the cornified envelope. Functionally, component of the stratum corneum that may contribute to epidermal antimicrobial host defenses. This chain is Cysteine-rich tail protein 1 (CYSRT1), found in Bos taurus (Bovine).